The sequence spans 313 residues: UPF0252 protein AF_0384 (313 aa).

It belongs to the UPF0252 family.

The sequence is that of UPF0252 protein AF_0384 from Archaeoglobus fulgidus (strain ATCC 49558 / DSM 4304 / JCM 9628 / NBRC 100126 / VC-16).